Here is a 129-residue protein sequence, read N- to C-terminus: Replication initiation control protein YabA (129 aa).

The Zn(2+) site is built by H103, C105, C119, and C122.

It belongs to the YabA family. Homotetramer. Interacts with both DnaA and DnaN, acting as a bridge between these two proteins. Zn(2+) is required as a cofactor.

It localises to the cytoplasm. It is found in the nucleoid. Functionally, involved in control of chromosome replication initiation. Inhibits the cooperative binding of DnaA to the oriC region, thus negatively regulating initiation of chromosome replication. Inhibits the ability of DnaA-ATP to form a helix on DNA; does not disassemble preformed DnaA-DNA helices. Decreases the residence time of DnaA on the chromosome at its binding sites (oriC, replication forks and promoter-binding sites). Tethers DnaA to the replication machinery via the DNA polymerase beta sliding clamp subunit (dnaN). Associates with oriC and other DnaA targets on the chromosome in a DnaA-dependent manner. The polypeptide is Replication initiation control protein YabA (Listeria innocua serovar 6a (strain ATCC BAA-680 / CLIP 11262)).